The following is a 94-amino-acid chain: MLKLNLQFFASKKGVSSTKNGRDSESKRLGAKRADGQYVTGGSILYRQRGTKIYPGENVGRGGDDTLFAKIDGVVRFERKGRDKKQVSVYAVAE.

Residues 1-9 constitute a propeptide that is removed on maturation; the sequence is MLKLNLQFF.

Belongs to the bacterial ribosomal protein bL27 family. In terms of processing, the N-terminus is cleaved by ribosomal processing cysteine protease Prp.

The chain is Large ribosomal subunit protein bL27 from Staphylococcus haemolyticus (strain JCSC1435).